Consider the following 353-residue polypeptide: 4-hydroxy-3-methylbut-2-en-1-yl diphosphate synthase (flavodoxin) (353 aa).

Cys268, Cys271, Cys303, and Glu310 together coordinate [4Fe-4S] cluster.

Belongs to the IspG family. The cofactor is [4Fe-4S] cluster.

It carries out the reaction (2E)-4-hydroxy-3-methylbut-2-enyl diphosphate + oxidized [flavodoxin] + H2O + 2 H(+) = 2-C-methyl-D-erythritol 2,4-cyclic diphosphate + reduced [flavodoxin]. It functions in the pathway isoprenoid biosynthesis; isopentenyl diphosphate biosynthesis via DXP pathway; isopentenyl diphosphate from 1-deoxy-D-xylulose 5-phosphate: step 5/6. In terms of biological role, converts 2C-methyl-D-erythritol 2,4-cyclodiphosphate (ME-2,4cPP) into 1-hydroxy-2-methyl-2-(E)-butenyl 4-diphosphate. The protein is 4-hydroxy-3-methylbut-2-en-1-yl diphosphate synthase (flavodoxin) of Ruminiclostridium cellulolyticum (strain ATCC 35319 / DSM 5812 / JCM 6584 / H10) (Clostridium cellulolyticum).